The following is a 105-amino-acid chain: Pyrimidine/purine nucleoside phosphorylase (105 aa).

This sequence belongs to the nucleoside phosphorylase PpnP family.

It carries out the reaction a purine D-ribonucleoside + phosphate = a purine nucleobase + alpha-D-ribose 1-phosphate. The enzyme catalyses adenosine + phosphate = alpha-D-ribose 1-phosphate + adenine. The catalysed reaction is cytidine + phosphate = cytosine + alpha-D-ribose 1-phosphate. It catalyses the reaction guanosine + phosphate = alpha-D-ribose 1-phosphate + guanine. It carries out the reaction inosine + phosphate = alpha-D-ribose 1-phosphate + hypoxanthine. The enzyme catalyses thymidine + phosphate = 2-deoxy-alpha-D-ribose 1-phosphate + thymine. The catalysed reaction is uridine + phosphate = alpha-D-ribose 1-phosphate + uracil. It catalyses the reaction xanthosine + phosphate = alpha-D-ribose 1-phosphate + xanthine. Functionally, catalyzes the phosphorolysis of diverse nucleosides, yielding D-ribose 1-phosphate and the respective free bases. Can use uridine, adenosine, guanosine, cytidine, thymidine, inosine and xanthosine as substrates. Also catalyzes the reverse reactions. The chain is Pyrimidine/purine nucleoside phosphorylase from Ralstonia pickettii (strain 12J).